A 283-amino-acid polypeptide reads, in one-letter code: Pantothenate synthetase (283 aa).

Residue 30–37 (MGTLHDGH) coordinates ATP. His-37 serves as the catalytic Proton donor. Gln-61 provides a ligand contact to (R)-pantoate. Gln-61 is a binding site for beta-alanine. An ATP-binding site is contributed by 148-151 (GLKD). Residue Gln-154 participates in (R)-pantoate binding. 185-188 (MSSR) contributes to the ATP binding site.

The protein belongs to the pantothenate synthetase family. As to quaternary structure, homodimer.

Its subcellular location is the cytoplasm. It catalyses the reaction (R)-pantoate + beta-alanine + ATP = (R)-pantothenate + AMP + diphosphate + H(+). Its pathway is cofactor biosynthesis; (R)-pantothenate biosynthesis; (R)-pantothenate from (R)-pantoate and beta-alanine: step 1/1. Functionally, catalyzes the condensation of pantoate with beta-alanine in an ATP-dependent reaction via a pantoyl-adenylate intermediate. The polypeptide is Pantothenate synthetase (Leptospira biflexa serovar Patoc (strain Patoc 1 / Ames)).